An 86-amino-acid chain; its full sequence is Diphthamide biosynthesis protein 3 (86 aa).

Residues 4-60 (YHDEVEIEDFEYDEEEEMYYYPCPCGDRFQISKEELIEGEEVATCPSCSLVIKVIYD) enclose the DPH-type MB domain. Cys-26, Cys-28, Cys-48, and Cys-51 together coordinate Fe cation.

This sequence belongs to the DPH3 family. Component of the 2-(3-amino-3-carboxypropyl)histidine synthase complex composed of Dph1, Dph2, Dph3 and a NADH-dependent reductase. Requires Fe(2+) as cofactor.

It catalyses the reaction [3Fe-4S](1+)-[protein] + Fe(2+)-[Dph3] = [3Fe-4S](0)-[protein] + Fe(3+)-[Dph3]. It carries out the reaction 2 [3Fe-4S](0)-[protein] + 2 Fe(2+)-[Dph3] + NADH = 2 [4Fe-4S](1+)-[protein] + 2 [Dph3] + NAD(+) + H(+). Its pathway is protein modification; peptidyl-diphthamide biosynthesis. In terms of biological role, required for the first step of diphthamide biosynthesis, a post-translational modification of histidine which occurs in elongation factor 2. Dph1 and Dph2 transfer a 3-amino-3-carboxypropyl (ACP) group from S-adenosyl-L-methionine (SAM) to a histidine residue, the reaction is assisted by a reduction system comprising Dph3 and a NADH-dependent reductase. Acts as an electron donor to reduce the Fe-S cluster in Dph1-Dph2 keeping the [4Fe-4S] clusters in the active and reduced state. Restores iron to Dph1-Dph2 iron-sulfur clusters which have degraded from [4Fe-4S] to [3Fe-4S] by donating an iron atom to reform [4Fe-4S] clusters, in a manner dependent on the presence of elongation factor 2 and SAM. Associates with the elongator complex and is required for tRNA Wobble base modifications mediated by the elongator complex. The elongator complex is required for multiple tRNA modifications, including mcm5U (5-methoxycarbonylmethyl uridine), mcm5s 2U (5-methoxycarbonylmethyl-2-thiouridine), and ncm5U (5-carbamoylmethyl uridine). This chain is Diphthamide biosynthesis protein 3, found in Drosophila melanogaster (Fruit fly).